We begin with the raw amino-acid sequence, 368 residues long: Dual-specificity RNA methyltransferase RlmN (368 aa).

Glu-94 serves as the catalytic Proton acceptor. The Radical SAM core domain maps to 100–334; that stretch reads EEDRATLCVS…VIVRKTRGDD (235 aa). Cysteines 107 and 339 form a disulfide. [4Fe-4S] cluster contacts are provided by Cys-114, Cys-118, and Cys-121. S-adenosyl-L-methionine-binding positions include 163-164, Ser-195, 217-219, and Asn-296; these read GE and SLH. Cys-339 serves as the catalytic S-methylcysteine intermediate.

Belongs to the radical SAM superfamily. RlmN family. [4Fe-4S] cluster is required as a cofactor.

Its subcellular location is the cytoplasm. The enzyme catalyses adenosine(2503) in 23S rRNA + 2 reduced [2Fe-2S]-[ferredoxin] + 2 S-adenosyl-L-methionine = 2-methyladenosine(2503) in 23S rRNA + 5'-deoxyadenosine + L-methionine + 2 oxidized [2Fe-2S]-[ferredoxin] + S-adenosyl-L-homocysteine. It catalyses the reaction adenosine(37) in tRNA + 2 reduced [2Fe-2S]-[ferredoxin] + 2 S-adenosyl-L-methionine = 2-methyladenosine(37) in tRNA + 5'-deoxyadenosine + L-methionine + 2 oxidized [2Fe-2S]-[ferredoxin] + S-adenosyl-L-homocysteine. In terms of biological role, specifically methylates position 2 of adenine 2503 in 23S rRNA and position 2 of adenine 37 in tRNAs. m2A2503 modification seems to play a crucial role in the proofreading step occurring at the peptidyl transferase center and thus would serve to optimize ribosomal fidelity. This is Dual-specificity RNA methyltransferase RlmN from Aeromonas salmonicida (strain A449).